The primary structure comprises 300 residues: Cation-efflux pump FieF (300 aa).

The next 4 membrane-spanning stretches (helical) occupy residues 12–32 (AAIA…FAWW), 39–59 (ILAA…NLLV), 82–102 (AALA…LTGI), and 114–134 (PGVG…LVSF). 2 residues coordinate Zn(2+): D45 and D49. The Zn(2+) site is built by H153 and D157. Transmembrane regions (helical) follow at residues 156–176 (SDVM…YGWH) and 178–198 (ADAL…LRMG).

Belongs to the cation diffusion facilitator (CDF) transporter (TC 2.A.4) family. FieF subfamily. Homodimer.

It is found in the cell inner membrane. The enzyme catalyses Zn(2+)(in) + H(+)(out) = Zn(2+)(out) + H(+)(in). It carries out the reaction Cd(2+)(in) + H(+)(out) = Cd(2+)(out) + H(+)(in). It catalyses the reaction Fe(2+)(in) + H(+)(out) = Fe(2+)(out) + H(+)(in). Functionally, divalent metal cation transporter which exports Zn(2+), Cd(2+) and possibly Fe(2+). May be involved in zinc and iron detoxification by efflux. This Escherichia coli O127:H6 (strain E2348/69 / EPEC) protein is Cation-efflux pump FieF.